Consider the following 306-residue polypeptide: CRISPR-associated endonuclease Cas1 (306 aa).

E143, H210, and D223 together coordinate Mn(2+).

The protein belongs to the CRISPR-associated endonuclease Cas1 family. In terms of assembly, homodimer, forms a heterotetramer with a Cas2 homodimer. Requires Mg(2+) as cofactor. The cofactor is Mn(2+).

Functionally, CRISPR (clustered regularly interspaced short palindromic repeat), is an adaptive immune system that provides protection against mobile genetic elements (viruses, transposable elements and conjugative plasmids). CRISPR clusters contain spacers, sequences complementary to antecedent mobile elements, and target invading nucleic acids. CRISPR clusters are transcribed and processed into CRISPR RNA (crRNA). Acts as a dsDNA endonuclease. Involved in the integration of spacer DNA into the CRISPR cassette. The protein is CRISPR-associated endonuclease Cas1 of Geobacter sulfurreducens (strain ATCC 51573 / DSM 12127 / PCA).